A 501-amino-acid polypeptide reads, in one-letter code: Splicing factor ESS-2 homolog (501 aa).

Composition is skewed to low complexity over residues 1-18 (MSATTRTPATPGTPGTPG) and 105-115 (ISGTGRSTSRR). 2 disordered regions span residues 1–20 (MSATTRTPATPGTPGTPGSL) and 105–163 (ISGT…GRDT). Over residues 126–151 (TPVSQAKCSNTPLPNSRATDTPFSTD) the composition is skewed to polar residues. Basic and acidic residues predominate over residues 152 to 163 (GSEKSDAEGRDT). A phosphoserine mark is found at Ser-409 and Ser-411. The segment at 425-471 (RGTPRLRHTPSPMSGRKRKVTPGVVRSTNTPILGEPKPKQQAKISTP) is disordered.

It belongs to the ESS2 family.

The protein localises to the nucleus. The polypeptide is Splicing factor ESS-2 homolog (Es2) (Drosophila melanogaster (Fruit fly)).